The primary structure comprises 299 residues: Glutamyl-Q tRNA(Asp) synthetase (299 aa).

Residues Arg9–Ser13 and Glu45 each bind L-glutamate. Residues Pro12–Ser22 carry the 'HIGH' region motif. 3 residues coordinate Zn(2+): Cys101, Cys103, and Cys118. Positions 170 and 188 each coordinate L-glutamate. The 'KMSKS' region signature appears at Lys226 to Ser230. An ATP-binding site is contributed by Lys229. The tract at residues Gln279–Asp299 is disordered. Residues Arg285–Asp299 are compositionally biased toward basic and acidic residues.

It belongs to the class-I aminoacyl-tRNA synthetase family. GluQ subfamily. Zn(2+) is required as a cofactor.

In terms of biological role, catalyzes the tRNA-independent activation of glutamate in presence of ATP and the subsequent transfer of glutamate onto a tRNA(Asp). Glutamate is transferred on the 2-amino-5-(4,5-dihydroxy-2-cyclopenten-1-yl) moiety of the queuosine in the wobble position of the QUC anticodon. The polypeptide is Glutamyl-Q tRNA(Asp) synthetase (Xanthomonas oryzae pv. oryzae (strain KACC10331 / KXO85)).